The primary structure comprises 202 residues: Dephospho-CoA kinase (202 aa).

A DPCK domain is found at 5–202; sequence IVGLTGGIAS…DADYRARANP (198 aa). 13–18 is an ATP binding site; it reads ASGKSA.

The protein belongs to the CoaE family.

The protein localises to the cytoplasm. The catalysed reaction is 3'-dephospho-CoA + ATP = ADP + CoA + H(+). It participates in cofactor biosynthesis; coenzyme A biosynthesis; CoA from (R)-pantothenate: step 5/5. Its function is as follows. Catalyzes the phosphorylation of the 3'-hydroxyl group of dephosphocoenzyme A to form coenzyme A. The polypeptide is Dephospho-CoA kinase (Xanthomonas axonopodis pv. citri (strain 306)).